The following is a 214-amino-acid chain: 3-isopropylmalate dehydratase small subunit (214 aa).

Belongs to the LeuD family. LeuD type 1 subfamily. Heterodimer of LeuC and LeuD.

The enzyme catalyses (2R,3S)-3-isopropylmalate = (2S)-2-isopropylmalate. It participates in amino-acid biosynthesis; L-leucine biosynthesis; L-leucine from 3-methyl-2-oxobutanoate: step 2/4. Functionally, catalyzes the isomerization between 2-isopropylmalate and 3-isopropylmalate, via the formation of 2-isopropylmaleate. This Desulforapulum autotrophicum (strain ATCC 43914 / DSM 3382 / VKM B-1955 / HRM2) (Desulfobacterium autotrophicum) protein is 3-isopropylmalate dehydratase small subunit.